Here is a 416-residue protein sequence, read N- to C-terminus: Gamma-glutamyl phosphate reductase (416 aa).

It belongs to the gamma-glutamyl phosphate reductase family.

Its subcellular location is the cytoplasm. The enzyme catalyses L-glutamate 5-semialdehyde + phosphate + NADP(+) = L-glutamyl 5-phosphate + NADPH + H(+). Its pathway is amino-acid biosynthesis; L-proline biosynthesis; L-glutamate 5-semialdehyde from L-glutamate: step 2/2. Its function is as follows. Catalyzes the NADPH-dependent reduction of L-glutamate 5-phosphate into L-glutamate 5-semialdehyde and phosphate. The product spontaneously undergoes cyclization to form 1-pyrroline-5-carboxylate. The sequence is that of Gamma-glutamyl phosphate reductase from Glaesserella parasuis serovar 5 (strain SH0165) (Haemophilus parasuis).